Consider the following 353-residue polypeptide: Methylthioribose-1-phosphate isomerase (353 aa).

Residues 48-50 (RGA), arginine 94, and glutamine 201 contribute to the substrate site. Aspartate 242 serves as the catalytic Proton donor. Residue 252–253 (NK) coordinates substrate.

The protein belongs to the eIF-2B alpha/beta/delta subunits family. MtnA subfamily.

It carries out the reaction 5-(methylsulfanyl)-alpha-D-ribose 1-phosphate = 5-(methylsulfanyl)-D-ribulose 1-phosphate. Its pathway is amino-acid biosynthesis; L-methionine biosynthesis via salvage pathway; L-methionine from S-methyl-5-thio-alpha-D-ribose 1-phosphate: step 1/6. In terms of biological role, catalyzes the interconversion of methylthioribose-1-phosphate (MTR-1-P) into methylthioribulose-1-phosphate (MTRu-1-P). This is Methylthioribose-1-phosphate isomerase from Roseiflexus sp. (strain RS-1).